The primary structure comprises 258 residues: Regulatory protein RecX (258 aa).

This sequence belongs to the RecX family.

It is found in the cytoplasm. Modulates RecA activity. In Streptococcus pneumoniae serotype 19F (strain G54), this protein is Regulatory protein RecX.